We begin with the raw amino-acid sequence, 159 residues long: Phosphopantetheine adenylyltransferase (159 aa).

Position 9 (serine 9) interacts with substrate. ATP is bound by residues 9–10 and histidine 17; that span reads SF. Lysine 41, leucine 73, and lysine 87 together coordinate substrate. ATP contacts are provided by residues 88–90, glutamate 98, and 123–129; these read GLR and YGYLSSS.

The protein belongs to the bacterial CoaD family. Homohexamer. It depends on Mg(2+) as a cofactor.

The protein resides in the cytoplasm. The catalysed reaction is (R)-4'-phosphopantetheine + ATP + H(+) = 3'-dephospho-CoA + diphosphate. It functions in the pathway cofactor biosynthesis; coenzyme A biosynthesis; CoA from (R)-pantothenate: step 4/5. Reversibly transfers an adenylyl group from ATP to 4'-phosphopantetheine, yielding dephospho-CoA (dPCoA) and pyrophosphate. In Thermoanaerobacter pseudethanolicus (strain ATCC 33223 / 39E) (Clostridium thermohydrosulfuricum), this protein is Phosphopantetheine adenylyltransferase.